The following is a 408-amino-acid chain: Zinc chaperone AztD (408 aa).

The signal sequence occupies residues 1–21 (MLRHLAGASALALTLAGAGFA). The N-terminal Zn(2+)-binding motif; binds a third Zn(2+) with low affinity signature appears at 23 to 29 (DHDHDHE). Residues histidine 99, histidine 102, aspartate 104, histidine 124, histidine 167, histidine 218, and histidine 408 each coordinate Zn(2+). An intrachain disulfide couples cysteine 214 to cysteine 231.

In terms of assembly, monomer.

It is found in the periplasm. Functionally, acts as a zinc chaperone in the AztABCD zinc transport system. Directly transfers one zinc cation to the solute binding protein AztC; the transfer occurs without the formation of a stable interaction. Binds 3 Zn(2+), two with high affinity and one with low affinity, and transfers only Zn(2+) bound to site 2 to AztC. Likely functions to store zinc in the periplasm and may be important for zinc accumulation in zinc-limited environments. The sequence is that of Zinc chaperone AztD from Paracoccus denitrificans (strain Pd 1222).